The following is a 562-amino-acid chain: Arginine--tRNA ligase 1 (562 aa).

Positions 122–132 match the 'HIGH' region motif; it reads PNIAKPFSMGH.

This sequence belongs to the class-I aminoacyl-tRNA synthetase family. As to quaternary structure, monomer.

Its subcellular location is the cytoplasm. The enzyme catalyses tRNA(Arg) + L-arginine + ATP = L-arginyl-tRNA(Arg) + AMP + diphosphate. The sequence is that of Arginine--tRNA ligase 1 from Bacillus thuringiensis subsp. konkukian (strain 97-27).